A 140-amino-acid chain; its full sequence is 3-hydroxyacyl-[acyl-carrier-protein] dehydratase FabZ (140 aa).

His48 is an active-site residue.

Belongs to the thioester dehydratase family. FabZ subfamily.

The protein resides in the cytoplasm. The enzyme catalyses a (3R)-hydroxyacyl-[ACP] = a (2E)-enoyl-[ACP] + H2O. Its function is as follows. Involved in unsaturated fatty acids biosynthesis. Catalyzes the dehydration of short chain beta-hydroxyacyl-ACPs and long chain saturated and unsaturated beta-hydroxyacyl-ACPs. The sequence is that of 3-hydroxyacyl-[acyl-carrier-protein] dehydratase FabZ from Oceanobacillus iheyensis (strain DSM 14371 / CIP 107618 / JCM 11309 / KCTC 3954 / HTE831).